A 156-amino-acid polypeptide reads, in one-letter code: Small ribosomal subunit protein uS7A/uS7B (156 aa).

It belongs to the universal ribosomal protein uS7 family. Part of the 30S ribosomal subunit. Contacts proteins S9 and S11.

Its function is as follows. One of the primary rRNA binding proteins, it binds directly to 16S rRNA where it nucleates assembly of the head domain of the 30S subunit. Is located at the subunit interface close to the decoding center, probably blocks exit of the E-site tRNA. The sequence is that of Small ribosomal subunit protein uS7A/uS7B from Cereibacter sphaeroides (strain ATCC 17029 / ATH 2.4.9) (Rhodobacter sphaeroides).